The following is an 82-amino-acid chain: ATP synthase subunit c, chloroplastic (82 aa).

The next 2 helical transmembrane spans lie at 3–23 (PLIC…GAIG) and 57–77 (LAFM…LMFA).

The protein belongs to the ATPase C chain family. F-type ATPases have 2 components, F(1) - the catalytic core - and F(0) - the membrane proton channel. F(1) has five subunits: alpha(3), beta(3), gamma(1), delta(1), epsilon(1). F(0) has four main subunits: a(1), b(1), b'(1) and c(10-14). The alpha and beta chains form an alternating ring which encloses part of the gamma chain. F(1) is attached to F(0) by a central stalk formed by the gamma and epsilon chains, while a peripheral stalk is formed by the delta, b and b' chains.

It is found in the plastid. Its subcellular location is the chloroplast thylakoid membrane. Functionally, f(1)F(0) ATP synthase produces ATP from ADP in the presence of a proton or sodium gradient. F-type ATPases consist of two structural domains, F(1) containing the extramembraneous catalytic core and F(0) containing the membrane proton channel, linked together by a central stalk and a peripheral stalk. During catalysis, ATP synthesis in the catalytic domain of F(1) is coupled via a rotary mechanism of the central stalk subunits to proton translocation. Key component of the F(0) channel; it plays a direct role in translocation across the membrane. A homomeric c-ring of between 10-14 subunits forms the central stalk rotor element with the F(1) delta and epsilon subunits. The sequence is that of ATP synthase subunit c, chloroplastic from Ostreococcus tauri.